Reading from the N-terminus, the 546-residue chain is Sulfite oxidase, mitochondrial (546 aa).

The N-terminal 80 residues, 1–80 (MLPRLYRSVA…YHDHRCRASQ (80 aa)), are a transit peptide targeting the mitochondrion. One can recognise a Cytochrome b5 heme-binding domain in the interval 83–162 (PRIYSKEDVR…LAEYKIGELN (80 aa)). Histidine 119 is a heme b binding site. Serine 124 bears the Phosphoserine mark. Residues histidine 144, glutamine 146, and histidine 148 each coordinate heme b. The tract at residues 166-175 (RMSPPLEASD) is hinge. Positions 176-402 (PYSNDPMRHP…YSHWQRRDYK (227 aa)) are moco domain. Mo-molybdopterin-binding positions include 216 to 220 (FTRNH), cysteine 265, aspartate 323, histidine 362, arginine 367, and 378 to 380 (HVK). Residues 403–539 (GFSPSVDWDT…RGVLSNAWHR (137 aa)) are homodimerization.

Homodimer. Requires heme b as cofactor. It depends on Mo-molybdopterin as a cofactor.

It is found in the mitochondrion intermembrane space. It carries out the reaction sulfite + O2 + H2O = sulfate + H2O2. It functions in the pathway energy metabolism; sulfur metabolism. In terms of biological role, catalyzes the oxidation of sulfite to sulfate, the terminal reaction in the oxidative degradation of sulfur-containing amino acids. The chain is Sulfite oxidase, mitochondrial from Rattus norvegicus (Rat).